The following is a 313-amino-acid chain: Formimidoylglutamase (313 aa).

Mn(2+)-binding residues include His130, Asp155, His157, Asp159, Asp241, and Asp243.

Belongs to the arginase family. The cofactor is Mn(2+).

It carries out the reaction N-formimidoyl-L-glutamate + H2O = formamide + L-glutamate. It participates in amino-acid degradation; L-histidine degradation into L-glutamate; L-glutamate from N-formimidoyl-L-glutamate (hydrolase route): step 1/1. Its function is as follows. Catalyzes the conversion of N-formimidoyl-L-glutamate to L-glutamate and formamide. The protein is Formimidoylglutamase of Citrobacter koseri (strain ATCC BAA-895 / CDC 4225-83 / SGSC4696).